We begin with the raw amino-acid sequence, 411 residues long: Argininosuccinate lyase (411 aa).

This sequence belongs to the lyase 1 family. Argininosuccinate lyase subfamily.

It localises to the cytoplasm. It catalyses the reaction 2-(N(omega)-L-arginino)succinate = fumarate + L-arginine. Its pathway is amino-acid biosynthesis; L-arginine biosynthesis; L-arginine from L-ornithine and carbamoyl phosphate: step 3/3. This is Argininosuccinate lyase from Legionella pneumophila (strain Lens).